Here is a 373-residue protein sequence, read N- to C-terminus: Outer membrane protein assembly factor BamC (373 aa).

An N-terminal signal peptide occupies residues 1 to 16; it reads MLKQVTPLVLIAAVTA. Residue cysteine 17 is the site of N-palmitoyl cysteine attachment. Cysteine 17 carries S-diacylglycerol cysteine lipidation.

The protein belongs to the BamC family. In terms of assembly, part of the Bam complex.

It is found in the cell outer membrane. Its function is as follows. Part of the outer membrane protein assembly complex, which is involved in assembly and insertion of beta-barrel proteins into the outer membrane. The chain is Outer membrane protein assembly factor BamC from Shewanella sediminis (strain HAW-EB3).